The primary structure comprises 338 residues: CRISPR system Cmr subunit Cmr1-1 (338 aa).

Belongs to the CRISPR system Cmr1 family. Part of the type III-B Cmr ribonucleoprotein (RNP) complex, an elongated RNP with Cmr2 and Cmr3 as the base, with Cmr4 and Cmr5 forming a helical core along the mature crRNA (39 or 45 nt in length), while the complex is capped by Cmr6 and Cmr1. The 5' end of the crRNA is bound to Cmr2 and Cmr3, while Cmr6 and a Cmr1 subunit (Cmr1-1 or Cmr1-2) cap the 3' end of the crRNA. The target RNA lies antiparallel to the crRNA, with its 5' end near Cmr1 and Cmr6 and its 3' end near Cmr2 and Cmr3; major target cleavage occurs nears the junction of Cmr1/Cmr6 and Cmr4/Cmr, with minor cleavage occurring at 6 nt intervals which coincide with the proposed spacing of Cmr4 subunits.

It localises to the cytoplasm. CRISPR (clustered regularly interspaced short palindromic repeat), is an adaptive immune system that provides protection against mobile genetic elements (viruses, transposable elements and conjugative plasmids). CRISPR clusters contain sequences complementary to antecedent mobile elements and target invading nucleic acids. CRISPR clusters are transcribed and processed into CRISPR RNA (crRNA), formerly called psiRNA (prokaryotic silencing) in this organism. Part of the Cmr ribonucleoprotein complex which has divalent cation-dependent endoribonuclease activity specific for ssRNA complementary to the crRNA (target RNA), generating 5' hydroxy- and 3' phosphate or 2'-3' cyclic phosphate termini. Cmr4 is probably the subunit that cleaves target RNA. Cmr complex does not cleave ssDNA complementary to the crRNA. Cleavage of invading RNA is guided by the crRNA; substrate cleavage occurs a fixed distance (14 nt) from the 3' end of the crRNA. In vitro reconstitution shows Cmr1-2 and Cmr5 are not absolutely necessary for target cleavage. In Pyrococcus furiosus (strain ATCC 43587 / DSM 3638 / JCM 8422 / Vc1), this protein is CRISPR system Cmr subunit Cmr1-1.